A 394-amino-acid chain; its full sequence is Protein maelstrom (394 aa).

A DNA-binding region (HMG box) is located at residues 2–69 (APKKQNGFMM…ARRDKRGSLN (68 aa)). Residues 44–93 (TQQRGPYNSDAKDANAARRDKRGSLNGHGQVDKAQREAAESLMDKAQREA) are disordered. The span at 73-93 (QVDKAQREAAESLMDKAQREA) shows a compositional bias: basic and acidic residues.

The protein belongs to the maelstrom family.

It localises to the cytoplasm. The protein resides in the nucleus. Involved both in the piRNA and miRNA metabolic processes. As a component of the meiotic nuage, plays a central role during oogenesis by repressing transposable elements and preventing their mobilization, which is essential for the germline integrity. Repression of transposable elements is mediated via the piRNA metabolic process, which mediates the repression of transposable elements during meiosis by forming complexes composed of piRNAs and Piwi proteins and governs the repression of transposons. As a nuclear component, it is required for proper differentiation in the germline stem cell (GSC) lineage by repressing microRNA-7 (miR-7), thereby acting as an indirect regulator of bag-of-marbles (Bam). Acts by binding to the promoter of miR-7 gene and repressing its expression; miR-7 repression alleviates the Bam repression by miR-7, thereby allowing differentiation in the germline stem cell (GSC) lineage. The polypeptide is Protein maelstrom (mael) (Drosophila sechellia (Fruit fly)).